We begin with the raw amino-acid sequence, 312 residues long: MKVAVLGAAGGIGQALALLLKTQLPSGSELSLYDIAPVTPGVAVDLSHIPTAVKIKGFSGEDATPALEGADVVLISAGVARKPGMDRSDLFNVNAGIVKNLVQQVAKTCPKACIGIITNPVNTTVAIAAEVLKKAGVYDKNKLFGVTTLDIIRSNTFVAELKGKQPGEVEVPVIGGHSGVTILPLLSQVPGVSFTEQEVADLTKRIQNAGTEVVEAKAGGGSATLSMGQAAARFGLSLVRALQGEQGVVECAYVEGDGQYARFFSQPLLLGKNGVEERKSIGTLSAFEQSALEGMLDTLKKDIALGEEFVNK.

Residues 7–13 (GAAGGIG) and D34 contribute to the NAD(+) site. Positions 81 and 87 each coordinate substrate. NAD(+) contacts are provided by residues N94 and 117–119 (ITN). Positions 119 and 153 each coordinate substrate. Residue H177 is the Proton acceptor of the active site. M227 is a binding site for NAD(+).

This sequence belongs to the LDH/MDH superfamily. MDH type 1 family. As to quaternary structure, homodimer.

It carries out the reaction (S)-malate + NAD(+) = oxaloacetate + NADH + H(+). Its function is as follows. Catalyzes the reversible oxidation of malate to oxaloacetate. In Escherichia coli (strain 55989 / EAEC), this protein is Malate dehydrogenase.